Here is a 242-residue protein sequence, read N- to C-terminus: Caffeoyl-CoA O-methyltransferase 2 (242 aa).

Residue Lys-16 participates in substrate binding. S-adenosyl-L-methionine-binding positions include Thr-58, Glu-80, 82 to 83, Ser-88, Asp-106, and Ala-135; that span reads GV. A substrate-binding site is contributed by Asp-158. Asp-158 is a binding site for a divalent metal cation. Asp-160 serves as a coordination point for S-adenosyl-L-methionine. Positions 184 and 185 each coordinate a divalent metal cation. Asn-189 contacts substrate.

Belongs to the class I-like SAM-binding methyltransferase superfamily. Cation-dependent O-methyltransferase family. CCoAMT subfamily. Requires a divalent metal cation as cofactor. Mostly expressed in petal limbs and tubes, and, at low levels, in stems, roots and leaves.

The protein localises to the cytoplasm. It localises to the cytosol. The enzyme catalyses (E)-caffeoyl-CoA + S-adenosyl-L-methionine = (E)-feruloyl-CoA + S-adenosyl-L-homocysteine + H(+). It carries out the reaction (E)-5-hydroxyferuloyl-CoA + S-adenosyl-L-methionine = (E)-sinapoyl-CoA + S-adenosyl-L-homocysteine + H(+). It functions in the pathway aromatic compound metabolism; phenylpropanoid biosynthesis. Its function is as follows. Involved in the production of floral volatile phenylpropanoids in flowers of fragrant cultivars (e.g. cv. Mitchell and cv. V26) from cinnamic acid, a common precursor with the anthocyanin biosynthesis pathway involved in flower pigmentation. Methylates caffeoyl-CoA to feruloyl-CoA, also able to methylate 5-hydroxyferuloyl-CoA. The sequence is that of Caffeoyl-CoA O-methyltransferase 2 from Petunia hybrida (Petunia).